An 841-amino-acid polypeptide reads, in one-letter code: uncharacterized protein (841 aa).

Positions 1–31 (MKIERYFKAIARAFIITFLFSLILQDNGVLA) are cleaved as a signal peptide.

The protein localises to the secreted. This is an uncharacterized protein from Schizosaccharomyces pombe (strain 972 / ATCC 24843) (Fission yeast).